A 448-amino-acid polypeptide reads, in one-letter code: Homogentisate 1,2-dioxygenase (448 aa).

H303 acts as the Proton acceptor in catalysis. Residues H346 and E352 each contribute to the Fe cation site. Residues Y361 and H382 each contribute to the homogentisate site. H382 contributes to the Fe cation binding site.

Belongs to the homogentisate dioxygenase family. In terms of assembly, hexamer; dimer of trimers. It depends on Fe cation as a cofactor.

It carries out the reaction homogentisate + O2 = 4-maleylacetoacetate + H(+). It functions in the pathway amino-acid degradation; L-phenylalanine degradation; acetoacetate and fumarate from L-phenylalanine: step 4/6. In terms of biological role, involved in the catabolism of homogentisate (2,5-dihydroxyphenylacetate or 2,5-OH-PhAc), a central intermediate in the degradation of phenylalanine and tyrosine. Catalyzes the oxidative ring cleavage of the aromatic ring of homogentisate to yield maleylacetoacetate. In Rhodopseudomonas palustris (strain BisA53), this protein is Homogentisate 1,2-dioxygenase.